The following is a 351-amino-acid chain: Phosphoribosylformylglycinamidine cyclo-ligase (351 aa).

Belongs to the AIR synthase family.

Its subcellular location is the cytoplasm. It catalyses the reaction 2-formamido-N(1)-(5-O-phospho-beta-D-ribosyl)acetamidine + ATP = 5-amino-1-(5-phospho-beta-D-ribosyl)imidazole + ADP + phosphate + H(+). It functions in the pathway purine metabolism; IMP biosynthesis via de novo pathway; 5-amino-1-(5-phospho-D-ribosyl)imidazole from N(2)-formyl-N(1)-(5-phospho-D-ribosyl)glycinamide: step 2/2. The polypeptide is Phosphoribosylformylglycinamidine cyclo-ligase (Xylella fastidiosa (strain 9a5c)).